The following is a 485-amino-acid chain: Beta-amyrin 28-monooxygenase CYP716A378 (485 aa).

A helical; Signal-anchor for type II membrane protein transmembrane segment spans residues 3 to 23 (LFFICGLVLFSTLSLISLFLL). 2 N-linked (GlcNAc...) asparagine glycosylation sites follow: Asn-25 and Asn-386. A heme-binding site is contributed by Cys-426.

This sequence belongs to the cytochrome P450 family. Heme is required as a cofactor. Mainly expressed in flowers and flower buds, to a lesser extent in young leaves and, at low levels, in old leaves, stems and roots.

It localises to the membrane. The catalysed reaction is beta-amyrin + 3 reduced [NADPH--hemoprotein reductase] + 3 O2 = oleanolate + 3 oxidized [NADPH--hemoprotein reductase] + 4 H2O + 4 H(+). Its pathway is secondary metabolite biosynthesis; terpenoid biosynthesis. Functionally, component of the oleanane-type triterpene saponins (e.g. saponarioside A and saponarioside B) biosynthetic pathway, leading to the production of natural products with detergent properties used as traditional sources of soap. An oxidoreductase that facilitates the oxidation of the methyl group to a carboxyl group at the C-28 position of beta-amyrin, resulting in the formation of oleanolate. The chain is Beta-amyrin 28-monooxygenase CYP716A378 from Saponaria officinalis (Common soapwort).